Reading from the N-terminus, the 221-residue chain is Vesicle-associated membrane protein 713 (221 aa).

Ala2 is modified (N-acetylalanine). Residues 2 to 190 (AIIFALVARG…RTIMWWRNVK (189 aa)) lie on the Cytoplasmic side of the membrane. The region spanning 7–112 (LVARGTVVLS…SMNDEFSRVL (106 aa)) is the Longin domain. Positions 127-187 (RMSRIKGEMS…RRYRTIMWWR (61 aa)) constitute a v-SNARE coiled-coil homology domain. A helical; Anchor for type IV membrane protein membrane pass occupies residues 191 to 211 (LTIALILVLALVVYIAMAFVC). The Vesicular segment spans residues 212-221 (HGPSLPSCFK).

The protein belongs to the synaptobrevin family. Interacts with subunits of the vacuole protein sorting (HOPS) complex including VPS11, VCL1, VPS18, VPS33, VPS39 and VPS41. Highly expressed in stems and roots. Detected in flowers and leaves.

It localises to the vacuole membrane. The protein localises to the prevacuolar compartment membrane. Functionally, involved in the targeting and/or fusion of transport vesicles to their target membrane. The polypeptide is Vesicle-associated membrane protein 713 (Arabidopsis thaliana (Mouse-ear cress)).